A 142-amino-acid chain; its full sequence is Alpha-lactalbumin (142 aa).

The signal sequence occupies residues 1–19 (MRFFVPLFLVGILFPAILA). One can recognise a C-type lysozyme domain in the interval 20–142 (KQFTKCELSQ…KLEQWLCEKL (123 aa)). 4 disulfides stabilise this stretch: Cys25-Cys139, Cys47-Cys130, Cys80-Cys96, and Cys92-Cys110. The Ca(2+) site is built by Thr57 and Gln58. Asn64 carries an N-linked (GlcNAc...) asparagine glycan. Zn(2+) is bound at residue Glu68. The N-linked (GlcNAc...) asparagine; atypical; partial glycan is linked to Asn90. Lys98, Leu100, Asp101, Asp102, Asp103, Asp106, and Asp107 together coordinate Ca(2+). Glu135 provides a ligand contact to Zn(2+).

Belongs to the glycosyl hydrolase 22 family. Lactose synthase (LS) is a heterodimer of a catalytic component, beta1,4-galactosyltransferase (beta4Gal-T1) and a regulatory component, alpha-lactalbumin (LA). Mammary gland specific. Secreted in milk.

The protein resides in the secreted. In terms of biological role, regulatory subunit of lactose synthase, changes the substrate specificity of galactosyltransferase in the mammary gland making glucose a good acceptor substrate for this enzyme. This enables LS to synthesize lactose, the major carbohydrate component of milk. In other tissues, galactosyltransferase transfers galactose onto the N-acetylglucosamine of the oligosaccharide chains in glycoproteins. This Homo sapiens (Human) protein is Alpha-lactalbumin (LALBA).